A 544-amino-acid polypeptide reads, in one-letter code: T-complex protein 1 subunit gamma (544 aa).

Cys368 and Cys374 are disulfide-bonded. A disordered region spans residues 525–544 (SKKRGGNEPTNPAAMAQGQE).

The protein belongs to the TCP-1 chaperonin family. Heterooligomeric complex of about 850 to 900 kDa that forms two stacked rings, 12 to 16 nm in diameter.

It localises to the cytoplasm. In terms of biological role, molecular chaperone; assists the folding of proteins upon ATP hydrolysis. Known to play a role, in vitro, in the folding of actin and tubulin. The polypeptide is T-complex protein 1 subunit gamma (Drosophila melanogaster (Fruit fly)).